A 63-amino-acid chain; its full sequence is Conotoxin Cal12.5 (63 aa).

An N-terminal signal peptide occupies residues 1-21; it reads MKVTCVLVVLLLLLPYGDLLG.

This sequence belongs to the conotoxin O1 superfamily. Post-translationally, contains 4 disulfide bonds. Expressed by the venom duct.

It localises to the secreted. Functionally, probable neurotoxin. In Californiconus californicus (California cone), this protein is Conotoxin Cal12.5.